A 630-amino-acid chain; its full sequence is 1-deoxy-D-xylulose-5-phosphate synthase (630 aa).

Thiamine diphosphate is bound by residues H72 and 113–115 (GHS). D144 is a Mg(2+) binding site. Thiamine diphosphate is bound by residues 145-146 (GA), N173, Y284, and E367. N173 serves as a coordination point for Mg(2+).

It belongs to the transketolase family. DXPS subfamily. As to quaternary structure, homodimer. It depends on Mg(2+) as a cofactor. Thiamine diphosphate is required as a cofactor.

It catalyses the reaction D-glyceraldehyde 3-phosphate + pyruvate + H(+) = 1-deoxy-D-xylulose 5-phosphate + CO2. It participates in metabolic intermediate biosynthesis; 1-deoxy-D-xylulose 5-phosphate biosynthesis; 1-deoxy-D-xylulose 5-phosphate from D-glyceraldehyde 3-phosphate and pyruvate: step 1/1. Functionally, catalyzes the acyloin condensation reaction between C atoms 2 and 3 of pyruvate and glyceraldehyde 3-phosphate to yield 1-deoxy-D-xylulose-5-phosphate (DXP). This is 1-deoxy-D-xylulose-5-phosphate synthase from Bacillus cereus (strain AH820).